We begin with the raw amino-acid sequence, 619 residues long: Zinc finger and BTB domain-containing protein 7C (619 aa).

Positions 34–101 (CDVLLVVQEQ…AYTSTLTITA (68 aa)) constitute a BTB domain. The segment at 129 to 218 (PGGDGGEEDD…DSFQAGSPGH (90 aa)) is disordered. Over residues 133–173 (GGEEDDKEDDDDDEDDDDEEDEEEEEEEEEDDDDDTEDFAD) the composition is skewed to acidic residues. The span at 191-208 (KTDHLTEKAYSDTPRDFP) shows a compositional bias: basic and acidic residues. 3 C2H2-type zinc fingers span residues 364 to 386 (QQCP…MRTH), 392 to 414 (YMCT…MRKH), and 420 to 442 (YLCI…MRIH). The C2H2-type 4; degenerate zinc-finger motif lies at 448–478 (YQCEFCYKSFTRSDHLHRHIKRQSCRMARPR).

In terms of tissue distribution, detected in normal cervical keratinocytes, and in some cervical carcinoma cell lines.

In terms of biological role, may be a tumor suppressor gene. The protein is Zinc finger and BTB domain-containing protein 7C (ZBTB7C) of Homo sapiens (Human).